Reading from the N-terminus, the 253-residue chain is MRVSQTYGLVLYNRNYREDDKLVKIFTETEGKRMFFVKHASKSKFNAVLQPLTIAHFILKINDNGLSYIDDYKEVLAFQETNSDLFKLSYASYITSLADVAISDNVADAQLFIFLKKTLELIEDGLDYEILTNIFEVQLLERFGVALNFHDCVFCHRVGLPFDFSHKYSGLLCPNHYYKDERRNHLDPNMLYLINRFQSIQFDDLQTISVKPEMKLKIRQFLDMIYDEYVGIHLKSKKFIDDLSSWGSIMKSD.

It belongs to the RecO family.

In terms of biological role, involved in DNA repair and RecF pathway recombination. The protein is DNA repair protein RecO of Streptococcus agalactiae serotype III (strain NEM316).